Here is a 510-residue protein sequence, read N- to C-terminus: Putative thymidine phosphorylase (510 aa).

The protein belongs to the thymidine/pyrimidine-nucleoside phosphorylase family. Type 2 subfamily.

The enzyme catalyses thymidine + phosphate = 2-deoxy-alpha-D-ribose 1-phosphate + thymine. The sequence is that of Putative thymidine phosphorylase from Nitrobacter hamburgensis (strain DSM 10229 / NCIMB 13809 / X14).